We begin with the raw amino-acid sequence, 581 residues long: A-type ATP synthase subunit A (581 aa).

An ATP-binding site is contributed by 234–241 (GPFGSGKT).

Belongs to the ATPase alpha/beta chains family. As to quaternary structure, has multiple subunits with at least A(3), B(3), C, D, E, F, H, I and proteolipid K(x).

It is found in the cell membrane. It catalyses the reaction ATP + H2O + 4 H(+)(in) = ADP + phosphate + 5 H(+)(out). Its function is as follows. Component of the A-type ATP synthase that produces ATP from ADP in the presence of a proton gradient across the membrane. The A chain is the catalytic subunit. The sequence is that of A-type ATP synthase subunit A from Archaeoglobus fulgidus (strain ATCC 49558 / DSM 4304 / JCM 9628 / NBRC 100126 / VC-16).